Reading from the N-terminus, the 1491-residue chain is Chromosome partition protein MukB (1491 aa).

34–41 (GGNGAGKS) serves as a coordination point for ATP. 5 coiled-coil regions span residues 302-450 (LIEQ…LKAE), 490-600 (ARSE…RFES), 781-806 (RAAR…AKAS), 836-1109 (EQAL…DLRT), and 1210-1239 (VEAI…ISSD). Positions 667-784 (PGGSNDPRLK…AIPLFGRAAR (118 aa)) are flexible hinge. The interval 1059 to 1080 (QRRRDELQERLHTSRSRKSEYE) is disordered.

Belongs to the SMC family. MukB subfamily. As to quaternary structure, homodimerization via its hinge domain. Binds to DNA via its C-terminal region. Interacts, and probably forms a ternary complex, with MukE and MukF via its C-terminal region. The complex formation is stimulated by calcium or magnesium. Interacts with tubulin-related protein FtsZ.

The protein localises to the cytoplasm. Its subcellular location is the nucleoid. Functionally, plays a central role in chromosome condensation, segregation and cell cycle progression. Functions as a homodimer, which is essential for chromosome partition. Involved in negative DNA supercoiling in vivo, and by this means organize and compact chromosomes. May achieve or facilitate chromosome segregation by condensation DNA from both sides of a centrally located replisome during cell division. The sequence is that of Chromosome partition protein MukB from Vibrio cholerae serotype O1 (strain ATCC 39315 / El Tor Inaba N16961).